The following is a 533-amino-acid chain: Protein translocase subunit SecD (533 aa).

Helical transmembrane passes span alanine 8–serine 28, isoleucine 377–valine 397, leucine 400–leucine 420, leucine 422–isoleucine 442, leucine 469–glycine 489, and glycine 495–threonine 515.

It belongs to the SecD/SecF family. SecD subfamily. As to quaternary structure, forms a complex with SecF. Part of the essential Sec protein translocation apparatus which comprises SecA, SecYEG and auxiliary proteins SecDF-YajC and YidC.

The protein resides in the cell inner membrane. Functionally, part of the Sec protein translocase complex. Interacts with the SecYEG preprotein conducting channel. SecDF uses the proton motive force (PMF) to complete protein translocation after the ATP-dependent function of SecA. The polypeptide is Protein translocase subunit SecD (Syntrophobacter fumaroxidans (strain DSM 10017 / MPOB)).